We begin with the raw amino-acid sequence, 284 residues long: 2-dehydro-3-deoxyphosphooctonate aldolase (284 aa).

The protein belongs to the KdsA family.

The protein localises to the cytoplasm. It carries out the reaction D-arabinose 5-phosphate + phosphoenolpyruvate + H2O = 3-deoxy-alpha-D-manno-2-octulosonate-8-phosphate + phosphate. It participates in carbohydrate biosynthesis; 3-deoxy-D-manno-octulosonate biosynthesis; 3-deoxy-D-manno-octulosonate from D-ribulose 5-phosphate: step 2/3. The protein operates within bacterial outer membrane biogenesis; lipopolysaccharide biosynthesis. This Photobacterium profundum (strain SS9) protein is 2-dehydro-3-deoxyphosphooctonate aldolase.